The chain runs to 231 residues: Probable pseudouridine-5'-phosphatase (231 aa).

The active-site Nucleophile is the Asp-15. The Mg(2+) site is built by Asp-15 and Asp-17. Catalysis depends on Asp-17, which acts as the Proton donor.

This sequence belongs to the HAD-like hydrolase superfamily. CbbY/CbbZ/Gph/YieH family. Requires Mg(2+) as cofactor.

The catalysed reaction is psi-UMP + H2O = pseudouridine + phosphate. Functionally, dephosphorylates pseudouridine 5'-phosphate, a potential intermediate in rRNA degradation. The protein is Probable pseudouridine-5'-phosphatase (Gs1l) of Drosophila melanogaster (Fruit fly).